The sequence spans 177 residues: Large ribosomal subunit protein uL6 (177 aa).

This sequence belongs to the universal ribosomal protein uL6 family. In terms of assembly, part of the 50S ribosomal subunit.

Its function is as follows. This protein binds to the 23S rRNA, and is important in its secondary structure. It is located near the subunit interface in the base of the L7/L12 stalk, and near the tRNA binding site of the peptidyltransferase center. The chain is Large ribosomal subunit protein uL6 from Acidovorax ebreus (strain TPSY) (Diaphorobacter sp. (strain TPSY)).